Consider the following 245-residue polypeptide: Phosphoadenosine 5'-phosphosulfate reductase (245 aa).

The Nucleophile; cysteine thiosulfonate intermediate role is filled by Cys-239.

Belongs to the PAPS reductase family. CysH subfamily.

It localises to the cytoplasm. The enzyme catalyses [thioredoxin]-disulfide + sulfite + adenosine 3',5'-bisphosphate + 2 H(+) = [thioredoxin]-dithiol + 3'-phosphoadenylyl sulfate. The protein operates within sulfur metabolism; hydrogen sulfide biosynthesis; sulfite from sulfate: step 3/3. Catalyzes the formation of sulfite from phosphoadenosine 5'-phosphosulfate (PAPS) using thioredoxin as an electron donor. The chain is Phosphoadenosine 5'-phosphosulfate reductase from Alkalilimnicola ehrlichii (strain ATCC BAA-1101 / DSM 17681 / MLHE-1).